Reading from the N-terminus, the 421-residue chain is Tyrosine--tRNA ligase (421 aa).

Tyr38 is a binding site for L-tyrosine. The 'HIGH' region signature appears at 43–52 (PTGDSLHIGH). L-tyrosine-binding residues include Tyr169 and Gln173. The short motif at 231-235 (KFGKS) is the 'KMSKS' region element. ATP is bound at residue Lys234. Residues 353-419 (KNLVDFLVDT…GKKKYTLVHI (67 aa)) form the S4 RNA-binding domain.

Belongs to the class-I aminoacyl-tRNA synthetase family. TyrS type 1 subfamily. Homodimer.

The protein localises to the cytoplasm. It carries out the reaction tRNA(Tyr) + L-tyrosine + ATP = L-tyrosyl-tRNA(Tyr) + AMP + diphosphate + H(+). In terms of biological role, catalyzes the attachment of tyrosine to tRNA(Tyr) in a two-step reaction: tyrosine is first activated by ATP to form Tyr-AMP and then transferred to the acceptor end of tRNA(Tyr). The sequence is that of Tyrosine--tRNA ligase from Lactobacillus delbrueckii subsp. bulgaricus (strain ATCC 11842 / DSM 20081 / BCRC 10696 / JCM 1002 / NBRC 13953 / NCIMB 11778 / NCTC 12712 / WDCM 00102 / Lb 14).